Consider the following 466-residue polypeptide: Anthocyanidin 3-O-glucosyltransferase 1 (466 aa).

His-22 acts as the Proton acceptor in catalysis. His-22 and Gln-87 together coordinate an anthocyanidin. The active-site Charge relay is the Asp-122. Thr-145 lines the UDP-alpha-D-glucose pocket. His-154 contributes to the an anthocyanidin binding site. UDP-alpha-D-glucose contacts are provided by Ala-346, Gln-348, His-363, Trp-366, Asn-367, Ser-368, and Glu-371. Gly-386 contacts an anthocyanidin. Residues Asp-387 and Gln-388 each coordinate UDP-alpha-D-glucose.

It belongs to the UDP-glycosyltransferase family. As to expression, highest expression detected in receptacles and achenes, with very low levels detected in runners, leaves, flowers, crowns and green receptacles.

It catalyses the reaction an anthocyanidin + UDP-alpha-D-glucose + H(+) = an anthocyanidin 3-O-beta-D-glucoside + UDP. The catalysed reaction is cyanidin + UDP-alpha-D-glucose = cyanidin 3-O-beta-D-glucoside + UDP + H(+). The enzyme catalyses pelargonidin + UDP-alpha-D-glucose = pelargonidin 3-O-beta-D-glucoside + UDP. It carries out the reaction peonidin + UDP-alpha-D-glucose = peonidin 3-O-beta-D-glucoside + UDP. It catalyses the reaction delphinidin + UDP-alpha-D-glucose = delphinidin 3-O-beta-D-glucoside + UDP. The catalysed reaction is a flavonol + UDP-alpha-D-glucose = a flavonol 3-O-beta-D-glucoside + UDP + H(+). The protein operates within pigment biosynthesis; anthocyanin biosynthesis. Functionally, in the presence of other necessary color factors, this glycosylation reaction allows the accumulation of anthocyanin pigments. Uses UDP-Glc as a sugar donor, but not UDP-Gal or UDP-GlcUA. Anthocyanidins are the preferred substrates in vivo, but flavonols can also be glucosylated in vitro. This is Anthocyanidin 3-O-glucosyltransferase 1 from Fragaria ananassa (Strawberry).